The sequence spans 316 residues: Pantothenate kinase (316 aa).

95–102 (GSVAVGKS) is a binding site for ATP.

The protein belongs to the prokaryotic pantothenate kinase family.

It localises to the cytoplasm. It carries out the reaction (R)-pantothenate + ATP = (R)-4'-phosphopantothenate + ADP + H(+). The protein operates within cofactor biosynthesis; coenzyme A biosynthesis; CoA from (R)-pantothenate: step 1/5. This Hamiltonella defensa subsp. Acyrthosiphon pisum (strain 5AT) protein is Pantothenate kinase.